The chain runs to 2599 residues: Non-reducing polyketide synthase azaA (2599 aa).

The interval 95–231 is N-terminal acylcarrier protein transacylase domain (SAT); sequence PNILLSPMVV…AARSISSLQQ (137 aa). Catalysis depends on Cys132, which acts as the Nucleophile; for transacylase activity. Residue His250 is the Proton donor/acceptor; for transacylase activity of the active site. In terms of domain architecture, Ketosynthase family 3 (KS3) spans 372 to 790; the sequence is PNEIAVIGMS…GSNASMVVAQ (419 aa). Catalysis depends on for beta-ketoacyl synthase activity residues Cys539, His674, and His713. A malonyl-CoA:ACP transacylase (MAT) domain region spans residues 902-1193; that stretch reads FGGQISNYVG…ITSMASRALG (292 aa). An N-terminal hotdog fold region spans residues 1282-1413; that stretch reads PKTLWSLIEA…GKLAFLSGQD (132 aa). In terms of domain architecture, PKS/mFAS DH spans 1282-1591; it reads PKTLWSLIEA…YHKVAKASMS (310 aa). Residues 1310-1589 form a product template (PT) domain region; that stretch reads LVSGHVIANT…INYHKVAKAS (280 aa). His1314 serves as the catalytic Proton acceptor; for dehydratase activity. Residues 1443–1591 form a C-terminal hotdog fold region; it reads ADDIIQGRNI…YHKVAKASMS (149 aa). The active-site Proton donor; for dehydratase activity is the Asp1499. The segment at 1601–1652 is disordered; it reads EAAPSSSTRAHPTSSSSPRLPGPFVPEDKSQNETQTAGTNAVAKKKSEKSAQ. A compositionally biased stretch (low complexity) spans 1602–1619; the sequence is AAPSSSTRAHPTSSSSPR. Residues 1653 to 1727 enclose the Carrier domain; that stretch reads QNVLDKTRAL…GLVEYVQSAV (75 aa). Residue Ser1687 is modified to O-(pantetheine 4'-phosphoryl)serine. The disordered stretch occupies residues 1749 to 1779; that stretch reads NLAASPSSSSSSTNLTEDSSLDPTETTTNIS. The segment covering 1750–1766 has biased composition (low complexity); that stretch reads LAASPSSSSSSTNLTED. A compositionally biased stretch (polar residues) spans 1769–1779; sequence LDPTETTTNIS. Residues 1952–2140 are methyltransferase domain; the sequence is DSLLNKLSYR…VGYGQVDWTD (189 aa). Residues 2222–2467 form an NADPH-binding (R) domain region; the sequence is ITGATGSLGV…LCWTPVNDVA (246 aa).

The cofactor is pantetheine 4'-phosphate.

Its pathway is secondary metabolite biosynthesis. In terms of biological role, non-reducing polyketide synthase; part of the gene cluster that mediates the biosynthesis of azaphilones, a class of fungal metabolites characterized by a highly oxygenated pyrano-quinone bicyclic core and exhibiting a broad range of bioactivities. In the first step, the non-reducing polyketide synthase azaA forms the hexaketide precursor from successive condensations of five malonyl-CoA units, presumably with a simple acetyl-CoA starter unit. The reactive polyketide chain then undergoes a PT-mediated C2-C7 cyclization to afford the aromatic ring and is eventually released as an aldehyde through the R-domain. The putative ketoreductase azaE is proposed to catalyze the reduction of the terminal ketone resulting in the early culture product FK17-P2a. The monooxygenase azaH was demonstrated to be the only enzyme required to convert FK17-P2a to azanigerone E. AzaH first hydroxylates the benzaldehyde intermediate FK17-P2a at C4, which triggers the formation of the pyran-ring to afford azanigerone E. In parallel, the 2,4-dimethylhexanoyl chain is synthesized by the HR-PKS azaB and is proposed to be transferred to the C4-hydroxyl of azanigerone E by the acyltransferase azaD directly from the ACP domain of azaB. Alternatively, the 2,4-dimethyl-hexanoyl chain may be offloaded from the HR-PKS as a carboxylic acid and converted to an acyl-CoA by azaF. The resulting acyl-CoA molecule could then be taken up as a substrate by AzaD to form azanigerone B. To yield the carboxylic acid substituent in azanigerone A, the hydroxypropyl side chain of azanigerone B would need to undergo a C-C oxidative cleavage catalyzed by cytochrome P450 AzaI. AzaI is proposed to act on a vicinal diol that leads to a C-C bond scission either through an alkoxyradical intermediate or a peroxy complex. In the biosynthesis of azanigerone A, azanigerone B first undergoes hydroxylation at C10, possibly catalyzed by one of the two FAD-dependent monooxygenases encoded in the cluster, azaG or azaL, resulting in the vicinal diol azanigerone C. Oxidative cleavage of azanigerone C by azaI would yield the corresponding aldehyde derivative of azanigerone A. Finally, the dehydrogenase azaJ is proposed to convert the aldehyde functional group into the carboxylic acid, completing the conversion from azanigerone B to azanigerone A. Alternatively, the oxidation of aldehyde to carboxylic acid may be catalyzed by the same P450 enzyme azaI via consecutive oxidation or by endogenous alcohol dehydrogenase. The chain is Non-reducing polyketide synthase azaA from Aspergillus niger (strain ATCC 1015 / CBS 113.46 / FGSC A1144 / LSHB Ac4 / NCTC 3858a / NRRL 328 / USDA 3528.7).